A 229-amino-acid polypeptide reads, in one-letter code: 2-C-methyl-D-erythritol 4-phosphate cytidylyltransferase (229 aa).

Belongs to the IspD/TarI cytidylyltransferase family. IspD subfamily.

It catalyses the reaction 2-C-methyl-D-erythritol 4-phosphate + CTP + H(+) = 4-CDP-2-C-methyl-D-erythritol + diphosphate. It functions in the pathway isoprenoid biosynthesis; isopentenyl diphosphate biosynthesis via DXP pathway; isopentenyl diphosphate from 1-deoxy-D-xylulose 5-phosphate: step 2/6. Its function is as follows. Catalyzes the formation of 4-diphosphocytidyl-2-C-methyl-D-erythritol from CTP and 2-C-methyl-D-erythritol 4-phosphate (MEP). This Clostridium botulinum (strain ATCC 19397 / Type A) protein is 2-C-methyl-D-erythritol 4-phosphate cytidylyltransferase.